A 446-amino-acid chain; its full sequence is ATP-dependent protease ATPase subunit HslU (446 aa).

ATP contacts are provided by residues Ile-18, 60–65, Asp-259, Glu-324, and Arg-396; that span reads GVGKTE.

It belongs to the ClpX chaperone family. HslU subfamily. In terms of assembly, a double ring-shaped homohexamer of HslV is capped on each side by a ring-shaped HslU homohexamer. The assembly of the HslU/HslV complex is dependent on binding of ATP.

It is found in the cytoplasm. Its function is as follows. ATPase subunit of a proteasome-like degradation complex; this subunit has chaperone activity. The binding of ATP and its subsequent hydrolysis by HslU are essential for unfolding of protein substrates subsequently hydrolyzed by HslV. HslU recognizes the N-terminal part of its protein substrates and unfolds these before they are guided to HslV for hydrolysis. This Vibrio atlanticus (strain LGP32) (Vibrio splendidus (strain Mel32)) protein is ATP-dependent protease ATPase subunit HslU.